Reading from the N-terminus, the 254-residue chain is 5-oxoprolinase subunit A (254 aa).

This sequence belongs to the LamB/PxpA family. In terms of assembly, forms a complex composed of PxpA, PxpB and PxpC.

It carries out the reaction 5-oxo-L-proline + ATP + 2 H2O = L-glutamate + ADP + phosphate + H(+). In terms of biological role, catalyzes the cleavage of 5-oxoproline to form L-glutamate coupled to the hydrolysis of ATP to ADP and inorganic phosphate. This is 5-oxoprolinase subunit A from Acinetobacter baumannii (strain AB307-0294).